Here is a 153-residue protein sequence, read N- to C-terminus: Histone H2B.3 (153 aa).

2 stretches are compositionally biased toward basic and acidic residues: residues 1-28 (MAPKAEKKPAAKKPAEEEPAAEKAEKAP) and 36-53 (EKRLPAGKAEKGSGEGRK). The tract at residues 1–61 (MAPKAEKKPA…RKAGRKKAKK (61 aa)) is disordered. 2 positions are modified to N6-acetyllysine: Lys7 and Lys37. Lys149 is covalently cross-linked (Glycyl lysine isopeptide (Lys-Gly) (interchain with G-Cter in ubiquitin)).

The protein belongs to the histone H2B family. The nucleosome is a histone octamer containing two molecules each of H2A, H2B, H3 and H4 assembled in one H3-H4 heterotetramer and two H2A-H2B heterodimers. The octamer wraps approximately 147 bp of DNA. In terms of processing, can be acetylated to form H2BK6ac and H2BK33ac. Monoubiquitinated by BRE1 to form H2BK143ub1 and deubiquitinated by UBP26. Required for heterochromatic histone H3 di- and trimethylation at H3K4me. May give a specific tag for epigenetic transcriptional activation.

The protein resides in the nucleus. It is found in the chromosome. Its function is as follows. Core component of nucleosome. Nucleosomes wrap and compact DNA into chromatin, limiting DNA accessibility to the cellular machineries which require DNA as a template. Histones thereby play a central role in transcription regulation, DNA repair, DNA replication and chromosomal stability. DNA accessibility is regulated via a complex set of post-translational modifications of histones, also called histone code, and nucleosome remodeling. The chain is Histone H2B.3 (H2B.3) from Oryza sativa subsp. japonica (Rice).